Reading from the N-terminus, the 166-residue chain is MAKTLSKPASGALAPWLGISLIVILFDQLSKIAILKTFAYGAQHALTSFFNLVLVYNRGAAFGFLSTASGWQRWAFTALGVGATLVICFLLKRHGHQRLFSVSLALILGGALGNVIDRLVYGHVIDFLDFHLGAWHFPAFNLADSAITIGAVLLIYDELRRVRGSR.

The next 4 helical transmembrane spans lie at A9–L29, A45–L65, W71–L91, and F100–V120. Catalysis depends on residues D126 and D144. The helical transmembrane segment at W135–I155 threads the bilayer.

This sequence belongs to the peptidase A8 family.

The protein resides in the cell inner membrane. It carries out the reaction Release of signal peptides from bacterial membrane prolipoproteins. Hydrolyzes -Xaa-Yaa-Zaa-|-(S,diacylglyceryl)Cys-, in which Xaa is hydrophobic (preferably Leu), and Yaa (Ala or Ser) and Zaa (Gly or Ala) have small, neutral side chains.. The protein operates within protein modification; lipoprotein biosynthesis (signal peptide cleavage). This protein specifically catalyzes the removal of signal peptides from prolipoproteins. This is Lipoprotein signal peptidase from Burkholderia cenocepacia (strain ATCC BAA-245 / DSM 16553 / LMG 16656 / NCTC 13227 / J2315 / CF5610) (Burkholderia cepacia (strain J2315)).